The sequence spans 204 residues: Leucyl/phenylalanyl-tRNA--protein transferase (204 aa).

This sequence belongs to the L/F-transferase family.

The protein localises to the cytoplasm. It carries out the reaction N-terminal L-lysyl-[protein] + L-leucyl-tRNA(Leu) = N-terminal L-leucyl-L-lysyl-[protein] + tRNA(Leu) + H(+). The catalysed reaction is N-terminal L-arginyl-[protein] + L-leucyl-tRNA(Leu) = N-terminal L-leucyl-L-arginyl-[protein] + tRNA(Leu) + H(+). The enzyme catalyses L-phenylalanyl-tRNA(Phe) + an N-terminal L-alpha-aminoacyl-[protein] = an N-terminal L-phenylalanyl-L-alpha-aminoacyl-[protein] + tRNA(Phe). Functions in the N-end rule pathway of protein degradation where it conjugates Leu, Phe and, less efficiently, Met from aminoacyl-tRNAs to the N-termini of proteins containing an N-terminal arginine or lysine. The polypeptide is Leucyl/phenylalanyl-tRNA--protein transferase (Brucella melitensis biotype 2 (strain ATCC 23457)).